The chain runs to 426 residues: Enolase (426 aa).

Position 165 (Gln165) interacts with (2R)-2-phosphoglycerate. The Proton donor role is filled by Glu209. Positions 244, 287, and 313 each coordinate Mg(2+). (2R)-2-phosphoglycerate contacts are provided by Lys338, Arg367, Ser368, and Lys389. The active-site Proton acceptor is the Lys338.

Belongs to the enolase family. It depends on Mg(2+) as a cofactor.

It is found in the cytoplasm. The protein resides in the secreted. Its subcellular location is the cell surface. It catalyses the reaction (2R)-2-phosphoglycerate = phosphoenolpyruvate + H2O. Its pathway is carbohydrate degradation; glycolysis; pyruvate from D-glyceraldehyde 3-phosphate: step 4/5. In terms of biological role, catalyzes the reversible conversion of 2-phosphoglycerate (2-PG) into phosphoenolpyruvate (PEP). It is essential for the degradation of carbohydrates via glycolysis. This is Enolase from Methanococcus maripaludis (strain DSM 14266 / JCM 13030 / NBRC 101832 / S2 / LL).